Consider the following 307-residue polypeptide: 4-hydroxybenzoate octaprenyltransferase (307 aa).

9 helical membrane-spanning segments follow: residues 19-39 (PVGI…AAMG), 48-68 (VTAG…AILM), 105-125 (AIAA…FLPI), 127-147 (VFYW…MKRY), 150-170 (LPQV…YVAI), 172-192 (GAAD…TVAY), 221-241 (VIII…VMWH), 243-263 (FVPT…AMMF), and 282-302 (FLAN…ACVW).

Belongs to the UbiA prenyltransferase family. The cofactor is Mg(2+).

It is found in the cell inner membrane. The enzyme catalyses all-trans-octaprenyl diphosphate + 4-hydroxybenzoate = 4-hydroxy-3-(all-trans-octaprenyl)benzoate + diphosphate. Its pathway is cofactor biosynthesis; ubiquinone biosynthesis. In terms of biological role, catalyzes the prenylation of para-hydroxybenzoate (PHB) with an all-trans polyprenyl group. Mediates the second step in the final reaction sequence of ubiquinone-8 (UQ-8) biosynthesis, which is the condensation of the polyisoprenoid side chain with PHB, generating the first membrane-bound Q intermediate 3-octaprenyl-4-hydroxybenzoate. The sequence is that of 4-hydroxybenzoate octaprenyltransferase from Psychrobacter arcticus (strain DSM 17307 / VKM B-2377 / 273-4).